We begin with the raw amino-acid sequence, 214 residues long: MRIILLGAPGAGKGTQAQFIMEKFGIPQISTGDMLRAAIKAGTELGKQAKAVIDAGQLVSDDIILGLIKERIAQADCEKGFLLDGFPRTIPQADGLKEMGINVDYVIEFDVADDVIVERMAGRRAHLPSGRTYHVVYNPPKVEGKDDVTGEDLVIREDDKEETVRARLNVYHTQTAPLIEYYGKEAAAGKTQYLKFDGTKQVSEVSADIAKALA.

Residue 10-15 (GAGKGT) coordinates ATP. The tract at residues 30 to 59 (STGDMLRAAIKAGTELGKQAKAVIDAGQLV) is NMP. Residues T31, R36, 57-59 (QLV), 85-88 (GFPR), and Q92 each bind AMP. Positions 122 to 159 (GRRAHLPSGRTYHVVYNPPKVEGKDDVTGEDLVIREDD) are LID. ATP is bound by residues R123 and 132-133 (TY). 2 residues coordinate AMP: R156 and R167. Position 200 (K200) interacts with ATP.

The protein belongs to the adenylate kinase family. Monomer.

It is found in the cytoplasm. The enzyme catalyses AMP + ATP = 2 ADP. Its pathway is purine metabolism; AMP biosynthesis via salvage pathway; AMP from ADP: step 1/1. Functionally, catalyzes the reversible transfer of the terminal phosphate group between ATP and AMP. Plays an important role in cellular energy homeostasis and in adenine nucleotide metabolism. The chain is Adenylate kinase from Vibrio cholerae serotype O1 (strain ATCC 39541 / Classical Ogawa 395 / O395).